A 667-amino-acid chain; its full sequence is Acetoacetyl-CoA synthetase (667 aa).

The protein belongs to the ATP-dependent AMP-binding enzyme family.

It localises to the cytoplasm. Its subcellular location is the cytosol. The catalysed reaction is acetoacetate + ATP + CoA = acetoacetyl-CoA + AMP + diphosphate. In terms of biological role, converts acetoacetate to acetoacetyl-CoA in the cytosol. Ketone body-utilizing enzyme, responsible for the synthesis of cholesterol and fatty acids. The protein is Acetoacetyl-CoA synthetase (AACS) of Gallus gallus (Chicken).